A 476-amino-acid chain; its full sequence is Glycogen synthase (476 aa).

Residue Lys15 participates in ADP-alpha-D-glucose binding.

The protein belongs to the glycosyltransferase 1 family. Bacterial/plant glycogen synthase subfamily.

The catalysed reaction is [(1-&gt;4)-alpha-D-glucosyl](n) + ADP-alpha-D-glucose = [(1-&gt;4)-alpha-D-glucosyl](n+1) + ADP + H(+). It functions in the pathway glycan biosynthesis; glycogen biosynthesis. In terms of biological role, synthesizes alpha-1,4-glucan chains using ADP-glucose. In Streptococcus sanguinis (strain SK36), this protein is Glycogen synthase.